The sequence spans 806 residues: MGKKRIVFFAYLPFFTIFMSFSFAGITKESPFSIGQTLSSSNGVYELGFFSLNNSQNQYLGIWFKSIIPQVVVWVANREKPVTDSAANLGISSNGSLLLSNGKHGVVWSTGDIFASNGSRAELTDHGNLVFIDKVSGRTLWQSFEHLGNTLLPTSIMMYNLVAGEKRGLTAWKSYTDPSPGEFVALITPQVPSQGIIMRGSTRYYRTGPWAKTRFTGSPQMDESYTSPFILTQDVNGSGYFSFVERGKPSRMILTSEGTMKVLVHNGMDWESTYEGPANSCDIYGVCGPFGLCVVSIPPKCKCFKGFVPKFAKEWKKGNWTSGCVRRTELHCQGNSSGKDANVFYTVPNIKPPDFYEYANSQNAEECHQNCLHNCSCLAFSYIPGIGCLMWSKDLMDTRQFSAAGELLSIRLARSELDVNKRKMTIVASTVSLTLFVIFGFAAFGFWRCRVEHNAHISNDAWRNFLQSQDVPGLEFFEMNAIQTATNNFSLSNKLGPGGFGSVYKARNGKLQDGREIAVKRLSSSSGQGKQEFMNEIVLISKLQHRNLVRVLGCCVEGTEKLLIYGFLKNKSLDTFVFDARKKLELDWPKRFEIIEGIARGLLYLHRDSRLRVIHRDLKVSNILLDEKMNPKISDFGLARMFQGTQYQEKTRRVVGTLGYMSPEYAWTGVFSEKSDIYSFGVLLLEIISGKKISSFSYGEEGKALLAYAWECWCETREVNFLDQALADSSHPSEVGRCVQIGLLCVQHEPADRPNTLELLSMLTTTSDLPLPKKPTFVVHTRKDESPSNDSMITVNEMTESVIQGR.

Residues 1–24 (MGKKRIVFFAYLPFFTIFMSFSFA) form the signal peptide. Positions 25 to 144 (GITKESPFSI…VSGRTLWQSF (120 aa)) constitute a Bulb-type lectin domain. Over 25–425 (GITKESPFSI…ELDVNKRKMT (401 aa)) the chain is Extracellular. N-linked (GlcNAc...) asparagine glycans are attached at residues Asn-53, Asn-94, Asn-117, and Asn-236. An EGF-like domain is found at 277 to 313 (PANSCDIYGVCGPFGLCVVSIPPKCKCFKGFVPKFAK). Intrachain disulfides connect Cys-281–Cys-293 and Cys-287–Cys-301. N-linked (GlcNAc...) asparagine glycosylation is found at Asn-319, Asn-335, and Asn-374. Positions 332–414 (CQGNSSGKDA…GELLSIRLAR (83 aa)) constitute a PAN domain. Intrachain disulfides connect Cys-367/Cys-388 and Cys-371/Cys-377. The chain crosses the membrane as a helical span at residues 426–446 (IVASTVSLTLFVIFGFAAFGF). The Cytoplasmic portion of the chain corresponds to 447–806 (WRCRVEHNAH…EMTESVIQGR (360 aa)). The region spanning 489–777 (FSLSNKLGPG…DLPLPKKPTF (289 aa)) is the Protein kinase domain. ATP contacts are provided by residues 495–503 (LGPGGFGSV) and Lys-520. A phosphoserine mark is found at Ser-526 and Ser-541. The interval 581 to 598 (RKKLELDWPKRFEIIEGI) is caM-binding. The active-site Proton acceptor is the Asp-617. Phosphoserine is present on residues Ser-621 and Ser-634. Thr-651 is modified (phosphothreonine). A phosphoserine mark is found at Ser-694, Ser-695, and Ser-788.

It belongs to the protein kinase superfamily. Ser/Thr protein kinase family.

It is found in the cell membrane. The enzyme catalyses L-seryl-[protein] + ATP = O-phospho-L-seryl-[protein] + ADP + H(+). It catalyses the reaction L-threonyl-[protein] + ATP = O-phospho-L-threonyl-[protein] + ADP + H(+). The sequence is that of G-type lectin S-receptor-like serine/threonine-protein kinase At1g61430 from Arabidopsis thaliana (Mouse-ear cress).